A 187-amino-acid chain; its full sequence is Cerebral dopamine neurotrophic factor (187 aa).

A signal peptide spans 1–24 (MRCTSPAALVTFCAGLWISNHVLA). Disulfide bonds link C37–C124, C40–C113, and C71–C82.

It belongs to the ARMET family.

The protein resides in the secreted. Its function is as follows. Trophic factor for dopamine neurons. Prevents the 6-hydroxydopamine (6-OHDA)-induced degeneration of dopaminergic neurons. When administered after 6-OHDA-lesioning, restores the dopaminergic function and prevents the degeneration of dopaminergic neurons in substantia nigra. This chain is Cerebral dopamine neurotrophic factor (Cdnf), found in Rattus norvegicus (Rat).